We begin with the raw amino-acid sequence, 313 residues long: Putative S-adenosyl-L-methionine-dependent methyltransferase MAP_4064c (313 aa).

Residues Asp-129 and 158–159 (DL) each bind S-adenosyl-L-methionine.

Belongs to the UPF0677 family.

Functionally, exhibits S-adenosyl-L-methionine-dependent methyltransferase activity. The sequence is that of Putative S-adenosyl-L-methionine-dependent methyltransferase MAP_4064c from Mycolicibacterium paratuberculosis (strain ATCC BAA-968 / K-10) (Mycobacterium paratuberculosis).